The following is a 268-amino-acid chain: tRNA pseudouridine synthase A (268 aa).

The Nucleophile role is filled by Asp52. Tyr113 is a binding site for substrate.

Belongs to the tRNA pseudouridine synthase TruA family. Homodimer.

The enzyme catalyses uridine(38/39/40) in tRNA = pseudouridine(38/39/40) in tRNA. Formation of pseudouridine at positions 38, 39 and 40 in the anticodon stem and loop of transfer RNAs. This Rhizobium leguminosarum bv. trifolii (strain WSM2304) protein is tRNA pseudouridine synthase A.